Reading from the N-terminus, the 366-residue chain is Sodium-potassium/proton antiporter ChaA (366 aa).

Residues 1–16 lie on the Cytoplasmic side of the membrane; sequence MSNAQEAVKTRHKETS. Transmembrane regions (helical) follow at residues 17–37 and 38–58; these read LIFP…QTLP and VVIA…FSVV. Over 59 to 74 the chain is Cytoplasmic; it reads RHADVLAHRLGEPYGS. The helical transmembrane segment at 75–95 threads the bilayer; it reads LILSLSVVILEVSLISALMAT. At 96-106 the chain is on the periplasmic side; that stretch reads GDAAPTLMRDT. A helical transmembrane segment spans residues 107 to 127; that stretch reads LYSIIMIVTGGLVGFSLLLGG. Topologically, residues 128-143 are cytoplasmic; that stretch reads RKFATQYMNLFGIKQY. The helical transmembrane segment at 144–164 threads the bilayer; it reads LIALFPLAIIVLVFPMALPAA. Residues 165–167 lie on the Periplasmic side of the membrane; that stretch reads NFS. Residues 168–188 form a helical membrane-spanning segment; the sequence is TGQALLVALISAAMYGVFLLI. The Cytoplasmic segment spans residues 189–216; it reads QTKTHQSLFVYEHEDDSDDDDPHHGKPS. The helical transmembrane segment at 217-237 threads the bilayer; sequence AHSSLWHAIWLIIHLIAVIAV. Topologically, residues 238–255 are periplasmic; that stretch reads TKMNASSLETLLDSMNAP. The helical transmembrane segment at 256 to 276 threads the bilayer; it reads VAFTGFLVALLILSPEGLGAL. Residues 277–290 lie on the Cytoplasmic side of the membrane; it reads KAVLNNQVQRAMNL. A helical transmembrane segment spans residues 291–311; sequence FFGSVLATISLTVPVVTLIAF. Topologically, residues 312 to 318 are periplasmic; the sequence is MTGNELQ. Residues 319 to 339 form a helical membrane-spanning segment; that stretch reads FALGAPEMVVMVASLVLCHIS. Residues 340-345 lie on the Cytoplasmic side of the membrane; sequence FSTGRT. The helical transmembrane segment at 346–366 threads the bilayer; sequence NVLNGAAHLALFAAYLMTIFA.

It belongs to the Ca(2+):cation antiporter (CaCA) (TC 2.A.19) family.

The protein resides in the cell inner membrane. It catalyses the reaction Na(+)(in) + H(+)(out) = Na(+)(out) + H(+)(in). The enzyme catalyses K(+)(in) + H(+)(out) = K(+)(out) + H(+)(in). The catalysed reaction is Ca(2+)(in) + H(+)(out) = Ca(2+)(out) + H(+)(in). Its activity is regulated as follows. Pronounced pH dependence with sodium as substrate. Ca(2+)/H(+) and Na(+)/H(+) antiporter activities are both inhibited by magnesium. Ca(2+)/H(+) activity is inhibited by the proton ionophore carbonyl cyanide m-chlorophenylhydrazone (CCCP). Its function is as follows. Sodium exporter that functions mainly at alkaline pH. Can also function as a potassium/proton and calcium/proton antiporter at alkaline pH. Does not play a major role in calcium export. The K(+)/H(+) antiporter activity may enable E.coli to adapt to K(+) salinity stress and to maintain K(+) homeostasis. This Escherichia coli (strain K12) protein is Sodium-potassium/proton antiporter ChaA.